Here is a 545-residue protein sequence, read N- to C-terminus: CTP synthase (545 aa).

Residues 1 to 266 (MTTRYIFVTG…DDLVVKRFGL (266 aa)) are amidoligase domain. Ser-14 serves as a coordination point for CTP. Ser-14 contributes to the UTP binding site. Residues 15–20 (SLGKGI) and Asp-72 contribute to the ATP site. Asp-72 and Glu-140 together coordinate Mg(2+). CTP-binding positions include 147–149 (DIE), 187–192 (KTKPTQ), and Lys-223. Residues 187–192 (KTKPTQ) and Lys-223 each bind UTP. An ATP-binding site is contributed by 239–241 (KDV). A Glutamine amidotransferase type-1 domain is found at 291–542 (VIGMVGKYIE…IAAASAHQKR (252 aa)). Residue Gly-352 participates in L-glutamine binding. Cys-379 functions as the Nucleophile; for glutamine hydrolysis in the catalytic mechanism. L-glutamine contacts are provided by residues 380–383 (LGMQ), Glu-403, and Arg-470. Residues His-515 and Glu-517 contribute to the active site.

It belongs to the CTP synthase family. Homotetramer.

The enzyme catalyses UTP + L-glutamine + ATP + H2O = CTP + L-glutamate + ADP + phosphate + 2 H(+). It carries out the reaction L-glutamine + H2O = L-glutamate + NH4(+). It catalyses the reaction UTP + NH4(+) + ATP = CTP + ADP + phosphate + 2 H(+). It participates in pyrimidine metabolism; CTP biosynthesis via de novo pathway; CTP from UDP: step 2/2. Allosterically activated by GTP, when glutamine is the substrate; GTP has no effect on the reaction when ammonia is the substrate. The allosteric effector GTP functions by stabilizing the protein conformation that binds the tetrahedral intermediate(s) formed during glutamine hydrolysis. Inhibited by the product CTP, via allosteric rather than competitive inhibition. In terms of biological role, catalyzes the ATP-dependent amination of UTP to CTP with either L-glutamine or ammonia as the source of nitrogen. Regulates intracellular CTP levels through interactions with the four ribonucleotide triphosphates. The protein is CTP synthase of Shewanella putrefaciens (strain CN-32 / ATCC BAA-453).